The sequence spans 366 residues: Spermidine/putrescine import ATP-binding protein PotA (366 aa).

Residues 8 to 239 (IRFENVTKQF…PINKFVADFI (232 aa)) form the ABC transporter domain. Residue 41–48 (GPSGCGKT) coordinates ATP.

This sequence belongs to the ABC transporter superfamily. Spermidine/putrescine importer (TC 3.A.1.11.1) family. As to quaternary structure, the complex is composed of two ATP-binding proteins (PotA), two transmembrane proteins (PotB and PotC) and a solute-binding protein (PotD).

The protein localises to the cell membrane. The enzyme catalyses ATP + H2O + polyamine-[polyamine-binding protein]Side 1 = ADP + phosphate + polyamineSide 2 + [polyamine-binding protein]Side 1.. Part of the ABC transporter complex PotABCD involved in spermidine/putrescine import. Responsible for energy coupling to the transport system. This chain is Spermidine/putrescine import ATP-binding protein PotA, found in Listeria monocytogenes serovar 1/2a (strain ATCC BAA-679 / EGD-e).